A 137-amino-acid chain; its full sequence is Putative pre-16S rRNA nuclease (137 aa).

Belongs to the YqgF nuclease family.

It localises to the cytoplasm. In terms of biological role, could be a nuclease involved in processing of the 5'-end of pre-16S rRNA. This is Putative pre-16S rRNA nuclease from Buchnera aphidicola subsp. Schizaphis graminum (strain Sg).